Here is a 283-residue protein sequence, read N- to C-terminus: Bifunctional protein FolD (283 aa).

Residues 165-167 (GRS), serine 190, and valine 231 each bind NADP(+).

Belongs to the tetrahydrofolate dehydrogenase/cyclohydrolase family. As to quaternary structure, homodimer.

It carries out the reaction (6R)-5,10-methylene-5,6,7,8-tetrahydrofolate + NADP(+) = (6R)-5,10-methenyltetrahydrofolate + NADPH. The catalysed reaction is (6R)-5,10-methenyltetrahydrofolate + H2O = (6R)-10-formyltetrahydrofolate + H(+). Its pathway is one-carbon metabolism; tetrahydrofolate interconversion. Catalyzes the oxidation of 5,10-methylenetetrahydrofolate to 5,10-methenyltetrahydrofolate and then the hydrolysis of 5,10-methenyltetrahydrofolate to 10-formyltetrahydrofolate. The sequence is that of Bifunctional protein FolD from Bacillus velezensis (strain DSM 23117 / BGSC 10A6 / LMG 26770 / FZB42) (Bacillus amyloliquefaciens subsp. plantarum).